Here is a 529-residue protein sequence, read N- to C-terminus: G-protein coupled receptor 161 (529 aa).

The Extracellular portion of the chain corresponds to 1 to 30 (MSLNSSLSCRKELSNLTEEEGGEGGVIITQ). N4 and N15 each carry an N-linked (GlcNAc...) asparagine glycan. A helical transmembrane segment spans residues 31–51 (FIAIIVITIFVCLGNLVIVVT). The Cytoplasmic segment spans residues 52-64 (LYKKSYLLTLSNK). A helical membrane pass occupies residues 65–85 (FVFSLTLSNFLLSVLVLPFVV). Over 86 to 101 (TSSIRREWIFGVVWCN) the chain is Extracellular. C100 and C178 form a disulfide bridge. Residues 102 to 123 (FSALLYLLISSASMLTLGVIAI) traverse the membrane as a helical segment. Over 124 to 143 (DRYYAVLYPMVYPMKITGNR) the chain is Cytoplasmic. Residues 144-164 (AVMALVYIWLHSLIGCLPPLF) traverse the membrane as a helical segment. The Extracellular segment spans residues 165 to 190 (GWSSVEFDEFKWMCVAAWHREPGYTA). Residues 191 to 211 (FWQIWCALFPFLVMLVCYGFI) traverse the membrane as a helical segment. The Cytoplasmic portion of the chain corresponds to 212-269 (FRVARVKARKVHCGTVVIVEEDAQRTGRKNSSTSTSSSGSRRNAFQGVVYSANQCKAL). A helical membrane pass occupies residues 270–290 (ITILVVLGAFMVTWGPYMVVI). Over 291–306 (ASEALWGKSSVSPSLE) the chain is Extracellular. Residues 307-327 (TWATWLSFASAVCHPLIYGLW) form a helical membrane-spanning segment. The Cytoplasmic segment spans residues 328–529 (NKTVRKELLG…EGDVLAAEQR (202 aa)).

Belongs to the G-protein coupled receptor 1 family.

The protein localises to the cell projection. Its subcellular location is the cilium membrane. It localises to the cell membrane. Functionally, key negative regulator of Shh signaling, which promotes the processing of GLI3 into GLI3R during neural tube development. Recruited by TULP3 and the IFT-A complex to primary cilia and acts as a regulator of the PKA-dependent basal repression machinery in Shh signaling by increasing cAMP levels, leading to promote the PKA-dependent processing of GLI3 into GLI3R and repress the Shh signaling. In presence of SHH, it is removed from primary cilia and is internalized into recycling endosomes, preventing its activity and allowing activation of the Shh signaling. Its ligand is unknown. The polypeptide is G-protein coupled receptor 161 (GPR161) (Homo sapiens (Human)).